Consider the following 806-residue polypeptide: Glycerol-3-phosphate acyltransferase (806 aa).

The HXXXXD motif motif lies at 305 to 310 (CHRSHM).

This sequence belongs to the GPAT/DAPAT family.

Its subcellular location is the cell inner membrane. The enzyme catalyses sn-glycerol 3-phosphate + an acyl-CoA = a 1-acyl-sn-glycero-3-phosphate + CoA. It functions in the pathway phospholipid metabolism; CDP-diacylglycerol biosynthesis; CDP-diacylglycerol from sn-glycerol 3-phosphate: step 1/3. The sequence is that of Glycerol-3-phosphate acyltransferase from Salmonella paratyphi B (strain ATCC BAA-1250 / SPB7).